Reading from the N-terminus, the 410-residue chain is Peptidase T (410 aa).

Zn(2+) is bound at residue His79. Asp81 is an active-site residue. Asp142 is a binding site for Zn(2+). Catalysis depends on Glu176, which acts as the Proton acceptor. Residues Glu177, Asp199, and His381 each coordinate Zn(2+).

Belongs to the peptidase M20B family. Zn(2+) serves as cofactor.

It localises to the cytoplasm. The catalysed reaction is Release of the N-terminal residue from a tripeptide.. In terms of biological role, cleaves the N-terminal amino acid of tripeptides. This is Peptidase T from Bacillus mycoides (strain KBAB4) (Bacillus weihenstephanensis).